The sequence spans 449 residues: Maltose-6'-phosphate glucosidase (449 aa).

An NAD(+)-binding site is contributed by 6–72; sequence FSIVIAGGGS…PDIEFAATTD (67 aa). Residues arginine 95 and asparagine 149 each contribute to the substrate site. Cysteine 171 provides a ligand contact to Mn(2+). The Proton donor role is filled by aspartate 172. Mn(2+) is bound at residue histidine 202. Tyrosine 265 serves as the catalytic Proton acceptor. Arginine 285 serves as a coordination point for substrate.

The protein belongs to the glycosyl hydrolase 4 family. In terms of assembly, homotetramer. Mn(2+) serves as cofactor. The cofactor is Fe(2+). Requires Co(2+) as cofactor. It depends on Ni(2+) as a cofactor. NAD(+) is required as a cofactor.

It carries out the reaction alpha-maltose 6'-phosphate + H2O = D-glucose 6-phosphate + D-glucose. Its activity is regulated as follows. Cellobiose-6'-phosphate and 6-phospho-beta-D-glucopyranoside are not substrates but competitive inhibitors of GlvA. Functionally, hydrolyzes maltose-6'-phosphate and trehalose-6'-phosphate. Is involved in the catabolism of alpha-glycosides accumulated via a phosphoenolpyruvate-dependent maltose phosphotransferase system (PEP-PTS). Is also able to significantly catalyze the hydrolysis of both 6-phospho-alpha- and 6-phospho-beta-glucosides containing activated leaving groups such as p-nitrophenol and does so with retention and inversion, respectively, of the substrate anomeric configuration. This chain is Maltose-6'-phosphate glucosidase (glvA), found in Bacillus subtilis (strain 168).